A 223-amino-acid chain; its full sequence is Cytidylate kinase (223 aa).

17–25 provides a ligand contact to ATP; it reads GPTASGKGT.

Belongs to the cytidylate kinase family. Type 1 subfamily.

Its subcellular location is the cytoplasm. The catalysed reaction is CMP + ATP = CDP + ADP. The enzyme catalyses dCMP + ATP = dCDP + ADP. The protein is Cytidylate kinase of Bordetella pertussis (strain Tohama I / ATCC BAA-589 / NCTC 13251).